The chain runs to 637 residues: MNANPKFLSATATVDEASIQPLPNSRKIYIEGSRPDIRVPMREITQSDTAASFGFEKNPPIYVYDTSGPYTDPAAKIDIRSGLDTPRLPWILERNDTEELPGPTSEYGIERLNDPKLAELRFNLHRKPRRALAGKNVSQMHYARQGIITPEMEFVAIRENMNRRAYLEELKKSGPKGEKLAELMGRQHPGQSFGAAIPQEITAEFVRSEIARGRAIIPANINHPEIEPMIIGRNFLVKINANIGNSAVTSSIGEEVEKMTWAIRWGGDNVMDLSTGKHIHETREWIIRNSPVPIGTVPIYQALEKVNGKAEDLTWEIFRDTLIEQAEQGVDYFTIHAGVLLRYVPMTAKRMTGIVSRGGSIMAKWCLAHHKESFLYEHFEDICEIMKAYDVSFSLGDGLRPGSIYDANDEAQLGELKTLGELTQIAWKHDVQVMIEGPGHVPMHLIKENMDLQLEQCHEAPFYTLGPLTTDIAPGYDHITSGIGAAQIGWYGTAMLCYVTPKEHLGLPNKVDVKDGIITYKIAAHAADLAKGHIGAQIRDNALSKARFEFRWEDQFNIGLDPDKAREFHDETLPKDSAKVAHFCSMCGPHFCSMKITQEVRDYAAKQGITEIQALKAGMEVKAIEFVKSGSEIYQKQ.

Residues Asn242, Met271, Tyr300, His336, 356–358 (SRG), 397–400 (DGLR), and Glu436 each bind substrate. His440 is a binding site for Zn(2+). Tyr463 provides a ligand contact to substrate. His504 is a Zn(2+) binding site. Residues Cys584, Cys587, and Cys592 each contribute to the [4Fe-4S] cluster site.

It belongs to the ThiC family. In terms of assembly, homodimer. [4Fe-4S] cluster serves as cofactor.

It catalyses the reaction 5-amino-1-(5-phospho-beta-D-ribosyl)imidazole + S-adenosyl-L-methionine = 4-amino-2-methyl-5-(phosphooxymethyl)pyrimidine + CO + 5'-deoxyadenosine + formate + L-methionine + 3 H(+). It participates in cofactor biosynthesis; thiamine diphosphate biosynthesis. Its function is as follows. Catalyzes the synthesis of the hydroxymethylpyrimidine phosphate (HMP-P) moiety of thiamine from aminoimidazole ribotide (AIR) in a radical S-adenosyl-L-methionine (SAM)-dependent reaction. This Janthinobacterium sp. (strain Marseille) (Minibacterium massiliensis) protein is Phosphomethylpyrimidine synthase.